Reading from the N-terminus, the 775-residue chain is Coiled-coil domain-containing protein R3HCC1L (775 aa).

Composition is skewed to basic and acidic residues over residues 1–16 (MQQE…KRPD) and 65–112 (ESQR…KGAE). 2 disordered regions span residues 1-127 (MQQE…HRAP) and 235-262 (LSSD…DISV). The tract at residues 7–27 (RCRVRTKRPDMALYVPKARRG) is EJC-binding motif; may mediate interaction with the EJC. Polar residues predominate over residues 235-247 (LSSDSETAPSSLE). Phosphoserine is present on serine 671. At threonine 695 the chain carries Phosphothreonine. A coiled-coil region spans residues 734 to 766 (RSKQSKTEREAELRKLQEARERKRLEAKQREDI). The segment at 755–775 (RKRLEAKQREDIWEGRDQSVV) is disordered.

In terms of assembly, may interact with the exon junction complex (EJC) composed at least of CASC3, EIF4A3, MAGOH and RBM8A.

The chain is Coiled-coil domain-containing protein R3HCC1L (R3hcc1l) from Mus musculus (Mouse).